Consider the following 353-residue polypeptide: Endophilin-A3 (353 aa).

Residues 1–21 are membrane-binding amphipathic helix; sequence MSVAGLKKQFHKASQLFSEKI. The 232-residue stretch at 18-249 folds into the BAR domain; the sequence is SEKISGAEGT…LQNRINVASS (232 aa). A required for dimerization upon membrane association region spans residues 60 to 87; sequence PNPAYRAKLGMLNTMSKIRGQVKTTGYP. A coiled-coil region spans residues 180-201; the sequence is DEEVKQAVEKFEESKELAERSM. An interaction with ARC region spans residues 218-254; that stretch reads FVEAALDYHKQSTEILEDLQSKLQNRINVASSRPKRE. The 60-residue stretch at 291–350 folds into the SH3 domain; sequence VDQPCCQALYDFEPENEGELGFKEGDIITLTNQIDENWYEGMLNGESGFFPHNYVEVMVP.

The protein belongs to the endophilin family. As to quaternary structure, interacts with ARC. Interacts with SYNJ1 and DNM1. Highest level in a region associated with endocytosis of yolk proteins in developing oocytes (at protein level). Highest level in small ovarian follicles. High levels in brain and testis. Lower level in adrenal glands.

The protein localises to the cytoplasm. The protein resides in the early endosome membrane. Functionally, implicated in endocytosis. May recruit other proteins to membranes with high curvature. Implicated in endocytosis of yolk proteins during oogenesis. This is Endophilin-A3 from Gallus gallus (Chicken).